The primary structure comprises 311 residues: Probable manganese-dependent inorganic pyrophosphatase (311 aa).

Mn(2+) contacts are provided by histidine 9, aspartate 13, aspartate 15, aspartate 77, histidine 99, and aspartate 151.

It belongs to the PPase class C family. It depends on Mn(2+) as a cofactor.

Its subcellular location is the cytoplasm. It catalyses the reaction diphosphate + H2O = 2 phosphate + H(+). This chain is Probable manganese-dependent inorganic pyrophosphatase, found in Streptococcus pyogenes serotype M1.